A 457-amino-acid polypeptide reads, in one-letter code: Oxygen-independent coproporphyrinogen III oxidase (457 aa).

Residues 47–279 (LKNPMPLSLY…EILESLISFL (233 aa)) enclose the Radical SAM core domain. Position 56 (tyrosine 56) interacts with S-adenosyl-L-methionine. [4Fe-4S] cluster is bound by residues cysteine 62 and cysteine 66. Phenylalanine 68 contacts S-adenosyl-L-methionine. Residue cysteine 69 participates in [4Fe-4S] cluster binding. S-adenosyl-L-methionine-binding positions include glycine 113, 114–115 (GT), glutamate 147, glutamine 174, arginine 186, aspartate 211, alanine 245, and isoleucine 331.

It belongs to the anaerobic coproporphyrinogen-III oxidase family. In terms of assembly, monomer. Requires [4Fe-4S] cluster as cofactor.

The protein localises to the cytoplasm. The catalysed reaction is coproporphyrinogen III + 2 S-adenosyl-L-methionine = protoporphyrinogen IX + 2 5'-deoxyadenosine + 2 L-methionine + 2 CO2. It participates in porphyrin-containing compound metabolism; protoporphyrin-IX biosynthesis; protoporphyrinogen-IX from coproporphyrinogen-III (AdoMet route): step 1/1. Its function is as follows. Involved in the heme biosynthesis. Catalyzes the anaerobic oxidative decarboxylation of propionate groups of rings A and B of coproporphyrinogen III to yield the vinyl groups in protoporphyrinogen IX. This chain is Oxygen-independent coproporphyrinogen III oxidase (hemN), found in Helicobacter pylori (strain J99 / ATCC 700824) (Campylobacter pylori J99).